A 287-amino-acid chain; its full sequence is 4-hydroxybenzoate octaprenyltransferase (287 aa).

9 consecutive transmembrane segments (helical) span residues 7-27 (FISY…LLLW), 30-50 (LWAL…LIFV), 94-114 (VAVA…LNAF), 118-138 (LSVL…FFAM), 142-162 (VLGI…LDFI), 167-187 (WFLF…YAMV), 209-229 (VVVI…VAQL), 235-255 (YFLV…KLVS), and 266-286 (FRHN…GLGV).

It belongs to the UbiA prenyltransferase family. It depends on Mg(2+) as a cofactor.

It is found in the cell inner membrane. It carries out the reaction all-trans-octaprenyl diphosphate + 4-hydroxybenzoate = 4-hydroxy-3-(all-trans-octaprenyl)benzoate + diphosphate. The protein operates within cofactor biosynthesis; ubiquinone biosynthesis. Functionally, catalyzes the prenylation of para-hydroxybenzoate (PHB) with an all-trans polyprenyl group. Mediates the second step in the final reaction sequence of ubiquinone-8 (UQ-8) biosynthesis, which is the condensation of the polyisoprenoid side chain with PHB, generating the first membrane-bound Q intermediate 3-octaprenyl-4-hydroxybenzoate. The polypeptide is 4-hydroxybenzoate octaprenyltransferase (Polynucleobacter necessarius subsp. necessarius (strain STIR1)).